Reading from the N-terminus, the 500-residue chain is Apolipoprotein N-acyltransferase (500 aa).

Transmembrane regions (helical) follow at residues Val5–Val25, Leu38–Thr58, Leu74–Ile94, Ile111–Trp131, Ala145–Val165, and Leu185–Ala205. Positions Leu215 to Asn462 constitute a CN hydrolase domain. Catalysis depends on Glu261, which acts as the Proton acceptor. The active site involves Lys318. Cys369 functions as the Nucleophile in the catalytic mechanism. Residues Asp469–Trp489 form a helical membrane-spanning segment.

It belongs to the CN hydrolase family. Apolipoprotein N-acyltransferase subfamily.

It localises to the cell inner membrane. The catalysed reaction is N-terminal S-1,2-diacyl-sn-glyceryl-L-cysteinyl-[lipoprotein] + a glycerophospholipid = N-acyl-S-1,2-diacyl-sn-glyceryl-L-cysteinyl-[lipoprotein] + a 2-acyl-sn-glycero-3-phospholipid + H(+). Its pathway is protein modification; lipoprotein biosynthesis (N-acyl transfer). In terms of biological role, catalyzes the phospholipid dependent N-acylation of the N-terminal cysteine of apolipoprotein, the last step in lipoprotein maturation. The sequence is that of Apolipoprotein N-acyltransferase from Nostoc sp. (strain PCC 7120 / SAG 25.82 / UTEX 2576).